The chain runs to 395 residues: 1-deoxy-D-xylulose 5-phosphate reductoisomerase (395 aa).

Positions 10, 11, 12, 13, 38, and 122 each coordinate NADPH. Lysine 123 is a 1-deoxy-D-xylulose 5-phosphate binding site. Glutamate 124 is a binding site for NADPH. Aspartate 148 provides a ligand contact to Mn(2+). Residues serine 149, glutamate 150, serine 178, and histidine 200 each coordinate 1-deoxy-D-xylulose 5-phosphate. Position 150 (glutamate 150) interacts with Mn(2+). An NADPH-binding site is contributed by glycine 206. Serine 213, asparagine 218, lysine 219, and glutamate 222 together coordinate 1-deoxy-D-xylulose 5-phosphate. Glutamate 222 provides a ligand contact to Mn(2+).

This sequence belongs to the DXR family. Requires Mg(2+) as cofactor. Mn(2+) serves as cofactor.

The catalysed reaction is 2-C-methyl-D-erythritol 4-phosphate + NADP(+) = 1-deoxy-D-xylulose 5-phosphate + NADPH + H(+). Its pathway is isoprenoid biosynthesis; isopentenyl diphosphate biosynthesis via DXP pathway; isopentenyl diphosphate from 1-deoxy-D-xylulose 5-phosphate: step 1/6. In terms of biological role, catalyzes the NADPH-dependent rearrangement and reduction of 1-deoxy-D-xylulose-5-phosphate (DXP) to 2-C-methyl-D-erythritol 4-phosphate (MEP). This chain is 1-deoxy-D-xylulose 5-phosphate reductoisomerase, found in Elusimicrobium minutum (strain Pei191).